A 500-amino-acid polypeptide reads, in one-letter code: L-arabinose isomerase (500 aa).

Residues glutamate 306, glutamate 333, histidine 350, and histidine 450 each coordinate Mn(2+).

The protein belongs to the arabinose isomerase family. Homohexamer. Mn(2+) serves as cofactor.

It catalyses the reaction beta-L-arabinopyranose = L-ribulose. The protein operates within carbohydrate degradation; L-arabinose degradation via L-ribulose; D-xylulose 5-phosphate from L-arabinose (bacterial route): step 1/3. Catalyzes the conversion of L-arabinose to L-ribulose. The polypeptide is L-arabinose isomerase (Escherichia coli O17:K52:H18 (strain UMN026 / ExPEC)).